A 463-amino-acid polypeptide reads, in one-letter code: uncharacterized protein (463 aa).

This is an uncharacterized protein from Ostreid herpesvirus 1 (isolate France) (OsHV-1).